Reading from the N-terminus, the 200-residue chain is Recombination protein RecR (200 aa).

The C4-type zinc-finger motif lies at 59-74 (CEKCNTFTEAQICEVC). One can recognise a Toprim domain in the interval 82 to 177 (ALLCVVETPA…AVTRLARGVP (96 aa)).

The protein belongs to the RecR family.

May play a role in DNA repair. It seems to be involved in an RecBC-independent recombinational process of DNA repair. It may act with RecF and RecO. This Burkholderia mallei (strain NCTC 10247) protein is Recombination protein RecR.